The following is a 293-amino-acid chain: UDP-3-O-acyl-N-acetylglucosamine deacetylase (293 aa).

Zn(2+) is bound by residues histidine 79, histidine 236, and aspartate 240. Histidine 263 (proton donor) is an active-site residue.

Belongs to the LpxC family. Zn(2+) serves as cofactor.

The enzyme catalyses a UDP-3-O-[(3R)-3-hydroxyacyl]-N-acetyl-alpha-D-glucosamine + H2O = a UDP-3-O-[(3R)-3-hydroxyacyl]-alpha-D-glucosamine + acetate. Its pathway is glycolipid biosynthesis; lipid IV(A) biosynthesis; lipid IV(A) from (3R)-3-hydroxytetradecanoyl-[acyl-carrier-protein] and UDP-N-acetyl-alpha-D-glucosamine: step 2/6. Catalyzes the hydrolysis of UDP-3-O-myristoyl-N-acetylglucosamine to form UDP-3-O-myristoylglucosamine and acetate, the committed step in lipid A biosynthesis. The protein is UDP-3-O-acyl-N-acetylglucosamine deacetylase of Phenylobacterium zucineum (strain HLK1).